The chain runs to 134 residues: Lymphocyte antigen 6S (134 aa).

Positions 1–26 are cleaved as a signal peptide; the sequence is MSSLQAMKTLSLVLLVALLSMERAQG. The UPAR/Ly6 domain occupies 28-76; that stretch reads RCYRCLAVLEGASCSVVSCPFLDGVCVSQKVSVFGSKVRGENKLSLLSC. 4 disulfides stabilise this stretch: Cys-29-Cys-53, Cys-32-Cys-41, Cys-76-Cys-98, and Cys-99-Cys-104. A lipid anchor (GPI-anchor amidated asparagine) is attached at Asn-105. Residues 106–134 constitute a propeptide, removed in mature form; that stretch reads AVVLAASSPWALCVQLLLSLGSVFLWALL.

The protein resides in the cell membrane. The protein is Lymphocyte antigen 6S of Homo sapiens (Human).